We begin with the raw amino-acid sequence, 324 residues long: Phospho-N-acetylmuramoyl-pentapeptide-transferase (324 aa).

Transmembrane regions (helical) follow at residues valine 5–isoleucine 25, glycine 50–methionine 70, leucine 77–leucine 97, leucine 117–serine 137, leucine 147–serine 167, leucine 176–tryptophan 196, valine 203–histidine 223, valine 227–leucine 247, leucine 250–leucine 270, and valine 302–valine 322.

This sequence belongs to the glycosyltransferase 4 family. MraY subfamily. Mg(2+) serves as cofactor.

The protein resides in the cell membrane. The catalysed reaction is UDP-N-acetyl-alpha-D-muramoyl-L-alanyl-gamma-D-glutamyl-meso-2,6-diaminopimeloyl-D-alanyl-D-alanine + di-trans,octa-cis-undecaprenyl phosphate = di-trans,octa-cis-undecaprenyl diphospho-N-acetyl-alpha-D-muramoyl-L-alanyl-D-glutamyl-meso-2,6-diaminopimeloyl-D-alanyl-D-alanine + UMP. The protein operates within cell wall biogenesis; peptidoglycan biosynthesis. Functionally, catalyzes the initial step of the lipid cycle reactions in the biosynthesis of the cell wall peptidoglycan: transfers peptidoglycan precursor phospho-MurNAc-pentapeptide from UDP-MurNAc-pentapeptide onto the lipid carrier undecaprenyl phosphate, yielding undecaprenyl-pyrophosphoryl-MurNAc-pentapeptide, known as lipid I. This Bacillus velezensis (strain DSM 23117 / BGSC 10A6 / LMG 26770 / FZB42) (Bacillus amyloliquefaciens subsp. plantarum) protein is Phospho-N-acetylmuramoyl-pentapeptide-transferase.